The sequence spans 179 residues: Ribosomal RNA small subunit methyltransferase G (179 aa).

S-adenosyl-L-methionine-binding positions include Gly-54, Phe-59, 105 to 106 (IE), and Arg-121.

This sequence belongs to the methyltransferase superfamily. RNA methyltransferase RsmG family.

The protein resides in the cytoplasm. It catalyses the reaction guanosine(527) in 16S rRNA + S-adenosyl-L-methionine = N(7)-methylguanosine(527) in 16S rRNA + S-adenosyl-L-homocysteine. Specifically methylates the N7 position of guanine in position 527 of 16S rRNA. The chain is Ribosomal RNA small subunit methyltransferase G from Helicobacter bizzozeronii.